Consider the following 272-residue polypeptide: Regulatory protein RecX (272 aa).

This sequence belongs to the RecX family.

It is found in the cytoplasm. Functionally, modulates RecA activity. This Staphylococcus aureus (strain Newman) protein is Regulatory protein RecX.